The sequence spans 369 residues: tRNA/tmRNA (uracil-C(5))-methyltransferase (369 aa).

S-adenosyl-L-methionine-binding residues include Q192, Y221, N226, E242, and D302. C327 (nucleophile) is an active-site residue. E361 (proton acceptor) is an active-site residue.

The protein belongs to the class I-like SAM-binding methyltransferase superfamily. RNA M5U methyltransferase family. TrmA subfamily.

The catalysed reaction is uridine(54) in tRNA + S-adenosyl-L-methionine = 5-methyluridine(54) in tRNA + S-adenosyl-L-homocysteine + H(+). The enzyme catalyses uridine(341) in tmRNA + S-adenosyl-L-methionine = 5-methyluridine(341) in tmRNA + S-adenosyl-L-homocysteine + H(+). Its function is as follows. Dual-specificity methyltransferase that catalyzes the formation of 5-methyluridine at position 54 (m5U54) in all tRNAs, and that of position 341 (m5U341) in tmRNA (transfer-mRNA). The sequence is that of tRNA/tmRNA (uracil-C(5))-methyltransferase from Haemophilus ducreyi (strain 35000HP / ATCC 700724).